A 77-amino-acid polypeptide reads, in one-letter code: Translation initiation factor IF-1, chloroplastic (77 aa).

The S1-like domain occupies 1–71; sequence MKEQKLIHEG…TRGRIIYRLR (71 aa).

This sequence belongs to the IF-1 family. In terms of assembly, component of the 30S ribosomal translation pre-initiation complex which assembles on the 30S ribosome in the order IF-2 and IF-3, IF-1 and N-formylmethionyl-tRNA(fMet); mRNA recruitment can occur at any time during PIC assembly.

It is found in the plastid. Its subcellular location is the chloroplast. Its function is as follows. One of the essential components for the initiation of protein synthesis. Stabilizes the binding of IF-2 and IF-3 on the 30S subunit to which N-formylmethionyl-tRNA(fMet) subsequently binds. Helps modulate mRNA selection, yielding the 30S pre-initiation complex (PIC). Upon addition of the 50S ribosomal subunit IF-1, IF-2 and IF-3 are released leaving the mature 70S translation initiation complex. This chain is Translation initiation factor IF-1, chloroplastic, found in Phalaenopsis aphrodite subsp. formosana (Moth orchid).